The following is a 216-amino-acid chain: Outer-membrane lipoprotein LolB (216 aa).

Positions 1 to 21 are cleaved as a signal peptide; sequence MLIFKICFYRLLPLSVLLLAA. The N-palmitoyl cysteine moiety is linked to residue cysteine 22. Cysteine 22 is lipidated: S-diacylglycerol cysteine.

Belongs to the LolB family. Monomer.

The protein localises to the cell outer membrane. Functionally, plays a critical role in the incorporation of lipoproteins in the outer membrane after they are released by the LolA protein. The chain is Outer-membrane lipoprotein LolB from Hamiltonella defensa subsp. Acyrthosiphon pisum (strain 5AT).